The following is a 452-amino-acid chain: Scaffold protein ILK (452 aa).

Met1 is subject to N-acetylmethionine. 5 ANK repeats span residues 2-30, 31-63, 64-96, 97-129, and 130-174; these read DDIF…LNQG, DDHG…INVM, NRGD…INAV, NEHG…VSIC, and NKYG…GTTR. The interaction with LIMS1 stretch occupies residues 33–139; that stretch reads HGFSPLHWAC…NKYGEMPVDK (107 aa). Phosphothreonine; by PAK1 is present on Thr173. A PH-like; mediates interaction with TGFB1I1 region spans residues 180-212; the sequence is GTLNKHSGIDFKQLNFLTKLNENHSGELWKGRW. Residue Ser186 is modified to Phosphoserine. One can recognise a Protein kinase domain in the interval 193 to 446; sequence LNFLTKLNEN…PKFDMIVPIL (254 aa). Positions 200, 202, 203, 204, and 220 each coordinate ATP. Ser246 carries the post-translational modification Phosphoserine; by PAK1. ATP-binding residues include His270, Met272, and Asn279. Residue Asp339 coordinates Mg(2+). Lys341 lines the ATP pocket. Residues 363-371 carry the Nuclear localization signal motif; the sequence is KKPEDTNRR. N6-acetyllysine is present on Lys426.

The protein belongs to the protein kinase superfamily. TKL Ser/Thr protein kinase family. Component of the heterotrimeric IPP (ILK-PINCH-PARVIN) complex composed of ILK, LIMS1/PINCH and PARVA; the complex binds to F-actin via the C-terminal tail of LIMS1 and the N-terminal region of PARVA, promoting F-actin filament bundling. Formation of the IPP complex is dependent on protein kinase C and precedes integrin-mediated cell adhesion and spreading. ILK also interacts with LIMS2/PINCH2 and with PARVB and PARVG which may substitute for LIMS1 and PARVA in the IPP complex; PARVA and PARVB compete for the same binding site. Interaction with PARVG promotes the establishment of cell polarity required for leukocyte migration. Interacts with the cytoplasmic domain of integrin ITGB1 and may also interact with integrins ITGB2, ITGB3 and/or ITGB5. Interacts probably also with TGFB1I1. Interacts (via ANK repeats) with EPHA1 (via SAM domain); stimulated by EFNA1 but independent of the kinase activity of EPHA1. Interacts with FERMT2. Interacts with LIMD2; leading to activate the protein kinase activity. Interacts with PXN/PAXILLIN (via LD motif 4). Interacts with CCDC25 (via cytoplasmic region); initiating the ILK-PARVB cascade to induce cytoskeleton rearrangement and directional migration of cells. Interacts with IQGAP1; the interaction is required for localization of IQGAP1 to the cell cortex. Post-translationally, phosphorylation by PAK1 modulates ILK subcellular location by promoting its nuclear export. As to expression, highly expressed in heart followed by skeletal muscle, pancreas and kidney. Weakly expressed in placenta, lung and liver.

The protein localises to the cell junction. Its subcellular location is the focal adhesion. It localises to the cell membrane. The protein resides in the cell projection. It is found in the lamellipodium. The protein localises to the cytoplasm. Its subcellular location is the myofibril. It localises to the sarcomere. The protein resides in the nucleus. It is found in the cytoskeleton. The protein localises to the microtubule organizing center. Its subcellular location is the centrosome. It localises to the cell cortex. Functionally, scaffold protein which mediates protein-protein interactions during a range of cellular events including focal adhesion assembly, cell adhesion and cell migration. Regulates integrin-mediated signal transduction by contributing to inside-out integrin activation. Recruits PARVA and LIMS1/PITCH to form the heterotrimeric IPP (ILK-PINCH-PARVIN) complex which binds to F-actin via the C-terminal tail of LIMS1 and the N-terminal region of PARVA, promoting F-actin filament bundling, a process required to generate force for actin cytoskeleton reorganization and subsequent dynamic cell adhesion events such as cell spreading and migration. Binding to PARVA promotes effective assembly of ILK into focal adhesions while PARVA-bound ILK can simultaneously engage integrin-beta cytoplasmic tails to mediate cell adhesion. Plays a role with PARVG in promoting the cell adhesion and spreading of leukocytes. Acts as an upstream effector of both AKT1/PKB and GSK3. Mediates trafficking of caveolae to the cell surface in an ITGB1-dependent manner by promoting the recruitment of IQGAP1 to the cell cortex which cooperates with its effector DIAPH1 to locally stabilize microtubules and allow stable insertion of caveolae into the plasma membrane. Required for the maintenance of mitotic spindle integrity by promoting phosphorylation of TACC3 by AURKA. Associates with chromatin and may act as a negative regulator of transcription when located in the nucleus. The polypeptide is Scaffold protein ILK (Homo sapiens (Human)).